Here is a 368-residue protein sequence, read N- to C-terminus: tRNA-specific 2-thiouridylase MnmA (368 aa).

Residues 11–18 (GMSGGVDS) and methionine 37 contribute to the ATP site. The interval 97-99 (NPD) is interaction with target base in tRNA. Cysteine 102 serves as the catalytic Nucleophile. A disulfide bridge links cysteine 102 with cysteine 199. ATP is bound at residue glycine 127. The segment at 149–151 (KDQ) is interaction with tRNA. Cysteine 199 functions as the Cysteine persulfide intermediate in the catalytic mechanism. Residues 311–312 (RY) are interaction with tRNA.

This sequence belongs to the MnmA/TRMU family. In terms of assembly, interacts with TusE.

Its subcellular location is the cytoplasm. It catalyses the reaction S-sulfanyl-L-cysteinyl-[protein] + uridine(34) in tRNA + AH2 + ATP = 2-thiouridine(34) in tRNA + L-cysteinyl-[protein] + A + AMP + diphosphate + H(+). Catalyzes the 2-thiolation of uridine at the wobble position (U34) of tRNA(Lys), tRNA(Glu) and tRNA(Gln), leading to the formation of s(2)U34, the first step of tRNA-mnm(5)s(2)U34 synthesis. Sulfur is provided by IscS, via a sulfur-relay system. Binds ATP and its substrate tRNAs. This is tRNA-specific 2-thiouridylase MnmA from Shigella boydii serotype 18 (strain CDC 3083-94 / BS512).